We begin with the raw amino-acid sequence, 434 residues long: Probable exopolygalacturonase A (434 aa).

Residues Met1–Ser19 form the signal peptide. N-linked (GlcNAc...) asparagine glycosylation is found at Asn46, Asn57, Asn106, Asn199, and Asn207. The PbH1 1 repeat unit spans residues Ser232 to Pro253. Asp246 functions as the Proton donor in the catalytic mechanism. A disulfide bridge links Cys248 with Cys265. N-linked (GlcNAc...) asparagine glycosylation occurs at Asn254. A PbH1 2 repeat occupies Ser255–Ser275. His269 is an active-site residue. 3 N-linked (GlcNAc...) asparagine glycosylation sites follow: Asn293, Asn329, and Asn354. Cys392 and Cys398 form a disulfide bridge. Residue Asn400 is glycosylated (N-linked (GlcNAc...) asparagine).

Belongs to the glycosyl hydrolase 28 family.

The protein localises to the secreted. The catalysed reaction is [(1-&gt;4)-alpha-D-galacturonosyl](n) + H2O = alpha-D-galacturonate + [(1-&gt;4)-alpha-D-galacturonosyl](n-1). In terms of biological role, specific in hydrolyzing the terminal glycosidic bond of polygalacturonic acid and oligogalacturonates. In Aspergillus niger (strain ATCC MYA-4892 / CBS 513.88 / FGSC A1513), this protein is Probable exopolygalacturonase A (pgxA).